A 419-amino-acid polypeptide reads, in one-letter code: Probable dual-specificity RNA methyltransferase RlmN (419 aa).

Positions 1–21 are disordered; it reads MTAESDSPDGPVSAGTGRPVR. The active-site Proton acceptor is Glu124. The Radical SAM core domain maps to 130–369; the sequence is YPDRATVCVS…ATTVRDTRGR (240 aa). Cys137 and Cys375 are oxidised to a cystine. 3 residues coordinate [4Fe-4S] cluster: Cys144, Cys148, and Cys151. S-adenosyl-L-methionine is bound by residues 199-200, Ser233, 256-258, and Asn332; these read GE and SLH. Cys375 serves as the catalytic S-methylcysteine intermediate. The tract at residues 383–419 is disordered; it reads AGRARRVESARPVESARPVGVAGAASGSPAHGSRVLR. Over residues 397 to 419 the composition is skewed to low complexity; it reads SARPVGVAGAASGSPAHGSRVLR.

The protein belongs to the radical SAM superfamily. RlmN family. [4Fe-4S] cluster is required as a cofactor.

The protein localises to the cytoplasm. It catalyses the reaction adenosine(2503) in 23S rRNA + 2 reduced [2Fe-2S]-[ferredoxin] + 2 S-adenosyl-L-methionine = 2-methyladenosine(2503) in 23S rRNA + 5'-deoxyadenosine + L-methionine + 2 oxidized [2Fe-2S]-[ferredoxin] + S-adenosyl-L-homocysteine. It carries out the reaction adenosine(37) in tRNA + 2 reduced [2Fe-2S]-[ferredoxin] + 2 S-adenosyl-L-methionine = 2-methyladenosine(37) in tRNA + 5'-deoxyadenosine + L-methionine + 2 oxidized [2Fe-2S]-[ferredoxin] + S-adenosyl-L-homocysteine. Functionally, specifically methylates position 2 of adenine 2503 in 23S rRNA and position 2 of adenine 37 in tRNAs. This Frankia alni (strain DSM 45986 / CECT 9034 / ACN14a) protein is Probable dual-specificity RNA methyltransferase RlmN.